Consider the following 443-residue polypeptide: Phosphoglucosamine mutase (443 aa).

Catalysis depends on Ser101, which acts as the Phosphoserine intermediate. Residues Ser101, Asp240, Asp242, and Asp244 each coordinate Mg(2+). Ser101 carries the phosphoserine modification.

The protein belongs to the phosphohexose mutase family. The cofactor is Mg(2+). In terms of processing, activated by phosphorylation.

The catalysed reaction is alpha-D-glucosamine 1-phosphate = D-glucosamine 6-phosphate. Its function is as follows. Catalyzes the conversion of glucosamine-6-phosphate to glucosamine-1-phosphate. This chain is Phosphoglucosamine mutase, found in Psychromonas ingrahamii (strain DSM 17664 / CCUG 51855 / 37).